Reading from the N-terminus, the 227-residue chain is UPF0173 metal-dependent hydrolase Cmaq_1073 (227 aa).

The protein belongs to the UPF0173 family.

This chain is UPF0173 metal-dependent hydrolase Cmaq_1073, found in Caldivirga maquilingensis (strain ATCC 700844 / DSM 13496 / JCM 10307 / IC-167).